We begin with the raw amino-acid sequence, 529 residues long: Bifunctional purine biosynthesis protein PurH (529 aa).

One can recognise an MGS-like domain in the interval 1-148 (MQQRRPIRRA…KNHKDVAIVV (148 aa)).

It belongs to the PurH family.

The catalysed reaction is (6R)-10-formyltetrahydrofolate + 5-amino-1-(5-phospho-beta-D-ribosyl)imidazole-4-carboxamide = 5-formamido-1-(5-phospho-D-ribosyl)imidazole-4-carboxamide + (6S)-5,6,7,8-tetrahydrofolate. It carries out the reaction IMP + H2O = 5-formamido-1-(5-phospho-D-ribosyl)imidazole-4-carboxamide. Its pathway is purine metabolism; IMP biosynthesis via de novo pathway; 5-formamido-1-(5-phospho-D-ribosyl)imidazole-4-carboxamide from 5-amino-1-(5-phospho-D-ribosyl)imidazole-4-carboxamide (10-formyl THF route): step 1/1. It functions in the pathway purine metabolism; IMP biosynthesis via de novo pathway; IMP from 5-formamido-1-(5-phospho-D-ribosyl)imidazole-4-carboxamide: step 1/1. In Yersinia pseudotuberculosis serotype IB (strain PB1/+), this protein is Bifunctional purine biosynthesis protein PurH.